The chain runs to 504 residues: Maturase K (504 aa).

The protein belongs to the intron maturase 2 family. MatK subfamily.

It localises to the plastid. The protein localises to the chloroplast. In terms of biological role, usually encoded in the trnK tRNA gene intron. Probably assists in splicing its own and other chloroplast group II introns. In Fagus crenata (Japanese beech), this protein is Maturase K.